Consider the following 494-residue polypeptide: Alpha-amylase-related protein (494 aa).

A signal peptide spans 1–20; the sequence is MFKFTFALALCVLAAGLVLA. Residue Q21 is modified to Pyrrolidone carboxylic acid. A disulfide bridge links C48 with C104. Ca(2+) contacts are provided by N118, Q169, and D178. A disulfide bridge links C157 with C171. Residue R206 participates in chloride binding. D208 serves as the catalytic Nucleophile. H212 is a Ca(2+) binding site. E245 serves as the catalytic Proton donor. Chloride contacts are provided by N308 and R343. 3 cysteine pairs are disulfide-bonded: C376–C382, C418–C441, and C448–C460.

It belongs to the glycosyl hydrolase 13 family. In terms of assembly, monomer. It depends on Ca(2+) as a cofactor. Requires chloride as cofactor.

The protein localises to the secreted. It catalyses the reaction Endohydrolysis of (1-&gt;4)-alpha-D-glucosidic linkages in polysaccharides containing three or more (1-&gt;4)-alpha-linked D-glucose units.. This is Alpha-amylase-related protein (Amyrel) from Drosophila pseudoobscura pseudoobscura (Fruit fly).